Reading from the N-terminus, the 282-residue chain is NADPH-dependent 7-cyano-7-deazaguanine reductase (282 aa).

I88–S90 is a binding site for substrate. Position 90 to 91 (S90 to K91) interacts with NADPH. Catalysis depends on C190, which acts as the Thioimide intermediate. Residue D197 is the Proton donor of the active site. H229–E230 is a binding site for substrate. R258 to G259 is an NADPH binding site.

It belongs to the GTP cyclohydrolase I family. QueF type 2 subfamily. Homodimer.

The protein localises to the cytoplasm. The catalysed reaction is 7-aminomethyl-7-carbaguanine + 2 NADP(+) = 7-cyano-7-deazaguanine + 2 NADPH + 3 H(+). It functions in the pathway tRNA modification; tRNA-queuosine biosynthesis. Functionally, catalyzes the NADPH-dependent reduction of 7-cyano-7-deazaguanine (preQ0) to 7-aminomethyl-7-deazaguanine (preQ1). In Salmonella paratyphi C (strain RKS4594), this protein is NADPH-dependent 7-cyano-7-deazaguanine reductase.